A 146-amino-acid chain; its full sequence is Lipoprotein signal peptidase (146 aa).

3 helical membrane-spanning segments follow: residues 10 to 30 (GLFV…LGGF), 54 to 74 (FLEG…LLFL), and 80 to 100 (FFVA…SNIL). Active-site residues include Asp110 and Asp127. The helical transmembrane segment at 118-138 (FEFAIFNFADVMIDVAVALFL) threads the bilayer.

It belongs to the peptidase A8 family.

It localises to the cell inner membrane. The catalysed reaction is Release of signal peptides from bacterial membrane prolipoproteins. Hydrolyzes -Xaa-Yaa-Zaa-|-(S,diacylglyceryl)Cys-, in which Xaa is hydrophobic (preferably Leu), and Yaa (Ala or Ser) and Zaa (Gly or Ala) have small, neutral side chains.. It functions in the pathway protein modification; lipoprotein biosynthesis (signal peptide cleavage). In terms of biological role, this protein specifically catalyzes the removal of signal peptides from prolipoproteins. This chain is Lipoprotein signal peptidase, found in Wolinella succinogenes (strain ATCC 29543 / DSM 1740 / CCUG 13145 / JCM 31913 / LMG 7466 / NCTC 11488 / FDC 602W) (Vibrio succinogenes).